A 152-amino-acid chain; its full sequence is Large ribosomal subunit protein bL9 (152 aa).

It belongs to the bacterial ribosomal protein bL9 family.

Its function is as follows. Binds to the 23S rRNA. The protein is Large ribosomal subunit protein bL9 of Synechococcus elongatus (strain ATCC 33912 / PCC 7942 / FACHB-805) (Anacystis nidulans R2).